Consider the following 374-residue polypeptide: MQHESPIKRRPSTRIYVGDVPIGDGAPIAVQSMTNTRTTDVAATVAQIKSLEKVGADIVRVSVPTMEAAEAFKLIKQQVSVPLVADIHFDYRIALKVAEYGVDCLRINPGNIGNEARIRSVVDCARDKGIPIRIGVNGGSLEKDLQLKYGEPTPEALVESAMRHVDILDRLNFDQFKVSVKASDVFLAVDSYRLLAKKIDQPLHLGITEAGGARAGSVKSAVGLGMLLAEGIGDTLRISLAADPVEEIKVGFDILKSLRIRSRGINFIACPSCSRQEFDVIGTVNALEQRLEDVLTPMDVSIIGCVVNGPGEAEVSHLGLAGSNKKSAFYEDGVRQKERFDNDDLVAQLEAKIRAKAARLDEKNRIDIKHVEQD.

[4Fe-4S] cluster-binding residues include cysteine 270, cysteine 273, cysteine 305, and glutamate 312.

This sequence belongs to the IspG family. Requires [4Fe-4S] cluster as cofactor.

It catalyses the reaction (2E)-4-hydroxy-3-methylbut-2-enyl diphosphate + oxidized [flavodoxin] + H2O + 2 H(+) = 2-C-methyl-D-erythritol 2,4-cyclic diphosphate + reduced [flavodoxin]. It functions in the pathway isoprenoid biosynthesis; isopentenyl diphosphate biosynthesis via DXP pathway; isopentenyl diphosphate from 1-deoxy-D-xylulose 5-phosphate: step 5/6. In terms of biological role, converts 2C-methyl-D-erythritol 2,4-cyclodiphosphate (ME-2,4cPP) into 1-hydroxy-2-methyl-2-(E)-butenyl 4-diphosphate. This Vibrio cholerae serotype O1 (strain ATCC 39315 / El Tor Inaba N16961) protein is 4-hydroxy-3-methylbut-2-en-1-yl diphosphate synthase (flavodoxin).